The chain runs to 130 residues: Small ribosomal subunit protein uS11 (130 aa).

The protein belongs to the universal ribosomal protein uS11 family. Part of the 30S ribosomal subunit. Interacts with proteins S7 and S18. Binds to IF-3.

Located on the platform of the 30S subunit, it bridges several disparate RNA helices of the 16S rRNA. Forms part of the Shine-Dalgarno cleft in the 70S ribosome. The polypeptide is Small ribosomal subunit protein uS11 (Shewanella frigidimarina (strain NCIMB 400)).